Reading from the N-terminus, the 141-residue chain is Hemoglobin subunit alpha (141 aa).

The 141-residue stretch at 1–141 (VLSPADKTNL…VSTVLTSKYR (141 aa)) folds into the Globin domain. Residue serine 3 is modified to Phosphoserine. Lysine 7 is modified (N6-succinyllysine). Phosphothreonine is present on threonine 8. Lysine 11 bears the N6-succinyllysine mark. Position 16 is an N6-acetyllysine; alternate (lysine 16). N6-succinyllysine; alternate is present on lysine 16. Residue tyrosine 24 is modified to Phosphotyrosine. Lysine 40 carries the post-translational modification N6-succinyllysine. A Phosphoserine modification is found at serine 49. Residue histidine 58 participates in O2 binding. Histidine 87 provides a ligand contact to heme b. Serine 102 is subject to Phosphoserine. The residue at position 108 (threonine 108) is a Phosphothreonine. At serine 124 the chain carries Phosphoserine. 2 positions are modified to phosphothreonine: threonine 134 and threonine 137. The residue at position 138 (serine 138) is a Phosphoserine.

The protein belongs to the globin family. In terms of assembly, heterotetramer of two alpha chains and two beta chains. In terms of tissue distribution, red blood cells.

Involved in oxygen transport from the lung to the various peripheral tissues. This chain is Hemoglobin subunit alpha, found in Tamias striatus (Eastern chipmunk).